We begin with the raw amino-acid sequence, 245 residues long: tRNA pseudouridine synthase A (245 aa).

The active-site Nucleophile is the Asp-52. Substrate is bound at residue Tyr-110.

It belongs to the tRNA pseudouridine synthase TruA family. Homodimer.

The catalysed reaction is uridine(38/39/40) in tRNA = pseudouridine(38/39/40) in tRNA. Functionally, formation of pseudouridine at positions 38, 39 and 40 in the anticodon stem and loop of transfer RNAs. This chain is tRNA pseudouridine synthase A, found in Ruminiclostridium cellulolyticum (strain ATCC 35319 / DSM 5812 / JCM 6584 / H10) (Clostridium cellulolyticum).